The following is a 321-amino-acid chain: Lipoyl synthase (321 aa).

Residues Cys-68, Cys-73, Cys-79, Cys-94, Cys-98, Cys-101, and Ser-308 each contribute to the [4Fe-4S] cluster site. The Radical SAM core domain occupies 80–297 (FNHGTATFMI…KDYAEEIGFT (218 aa)).

The protein belongs to the radical SAM superfamily. Lipoyl synthase family. It depends on [4Fe-4S] cluster as a cofactor.

Its subcellular location is the cytoplasm. It catalyses the reaction [[Fe-S] cluster scaffold protein carrying a second [4Fe-4S](2+) cluster] + N(6)-octanoyl-L-lysyl-[protein] + 2 oxidized [2Fe-2S]-[ferredoxin] + 2 S-adenosyl-L-methionine + 4 H(+) = [[Fe-S] cluster scaffold protein] + N(6)-[(R)-dihydrolipoyl]-L-lysyl-[protein] + 4 Fe(3+) + 2 hydrogen sulfide + 2 5'-deoxyadenosine + 2 L-methionine + 2 reduced [2Fe-2S]-[ferredoxin]. It functions in the pathway protein modification; protein lipoylation via endogenous pathway; protein N(6)-(lipoyl)lysine from octanoyl-[acyl-carrier-protein]: step 2/2. Its function is as follows. Catalyzes the radical-mediated insertion of two sulfur atoms into the C-6 and C-8 positions of the octanoyl moiety bound to the lipoyl domains of lipoate-dependent enzymes, thereby converting the octanoylated domains into lipoylated derivatives. The polypeptide is Lipoyl synthase (Shewanella loihica (strain ATCC BAA-1088 / PV-4)).